Reading from the N-terminus, the 191-residue chain is Protein GrpE (191 aa).

Residues 1–49 (MSEEKQTAEQVEAAEQEEVTEQAEQAASQEQHEETAGQEEALQHQIDEL) are disordered. The span at 12–21 (EAAEQEEVTE) shows a compositional bias: acidic residues. Positions 30–49 (EQHEETAGQEEALQHQIDEL) are enriched in basic and acidic residues.

Belongs to the GrpE family. In terms of assembly, homodimer.

It is found in the cytoplasm. In terms of biological role, participates actively in the response to hyperosmotic and heat shock by preventing the aggregation of stress-denatured proteins, in association with DnaK and GrpE. It is the nucleotide exchange factor for DnaK and may function as a thermosensor. Unfolded proteins bind initially to DnaJ; upon interaction with the DnaJ-bound protein, DnaK hydrolyzes its bound ATP, resulting in the formation of a stable complex. GrpE releases ADP from DnaK; ATP binding to DnaK triggers the release of the substrate protein, thus completing the reaction cycle. Several rounds of ATP-dependent interactions between DnaJ, DnaK and GrpE are required for fully efficient folding. This is Protein GrpE from Bacillus velezensis (strain DSM 23117 / BGSC 10A6 / LMG 26770 / FZB42) (Bacillus amyloliquefaciens subsp. plantarum).